The chain runs to 521 residues: Cell adhesion molecule CEACAM1 (521 aa).

Positions methionine 1 to alanine 34 are cleaved as a signal peptide. The Ig-like V-type domain occupies glutamate 35–proline 142. Residues glutamate 35–glycine 428 lie on the Extracellular side of the membrane. The tract at residues glutamate 39–proline 142 is required for homophilic binding. 16 N-linked (GlcNAc...) asparagine glycosylation sites follow: asparagine 71, asparagine 89, asparagine 104, asparagine 148, asparagine 152, asparagine 199, asparagine 206, asparagine 210, asparagine 226, asparagine 258, asparagine 290, asparagine 294, asparagine 304, asparagine 317, asparagine 333, and asparagine 375. Ig-like C2-type domains follow at residues proline 147–asparagine 234, proline 239–threonine 319, and proline 323–aspartate 411. Cysteine 167 and cysteine 217 form a disulfide bridge. Cysteine 261 and cysteine 301 are joined by a disulfide. A disulfide bridge connects residues cysteine 346 and cysteine 394. A helical membrane pass occupies residues isoleucine 429 to leucine 447. The interval tyrosine 445–aspartate 457 is interaction with calmodulin. An interaction with FLNA region spans residues leucine 447–lysine 521. Residues tyrosine 448–lysine 521 lie on the Cytoplasmic side of the membrane. Positions glycine 455–lysine 521 are disordered. The segment covering aspartate 457–proline 466 has biased composition (basic and acidic residues). A compositionally biased stretch (polar residues) spans serine 467–asparagine 481. The required for interaction with PTPN11 and PTPN6 and for control of phosphorylation level stretch occupies residues aspartate 484–lysine 521. Phosphotyrosine; by SRC, LCK, INSR and EGFR is present on tyrosine 488. Residues leucine 491 to valine 514 show a composition bias toward polar residues. Serine 503 is modified (phosphoserine). The residue at position 515 (tyrosine 515) is a Phosphotyrosine; by INSR, SRC and LCK. The tract at residues tyrosine 515–valine 518 is essential for interaction with PTPN11 and PTPN6.

Belongs to the immunoglobulin superfamily. CEA family. In terms of assembly, (Microbial infection) Interacts with MHV S1 spike glycoprotein. Monomer. Oligomer. Heterodimer. Homodimer. Cis-dimer/oligomer (via Ig-like C2-type and/or via cytoplasmic domains); induced by trans-homophilic cell adhesion through an allosteric mechanism transmitted by the Ig-like V-type domain, and is regulated by intracellular calcium and calmodulin. Interacts (via cytoplasmic domain) with calmodulin in a calcium dependent manner; reduces homophilic cell adhesion through dissociation of dimer. Isoform 1 interacts (via cytoplasmic domain) with PTPN11 (preferentially) and PTPN6; cis-homodimer form is preferred; this interaction is decreased by formation of isoform 1 / isoform 2 cis-heterodimers and is dependent on the monomer/dimer equilibrium; this interaction is phosphorylation-dependent. Isoform 1 interacts with LYN. Isoform 1 interacts (via cytoplasmic domain) with SRC (via SH2 domain); this interaction is regulated by trans-homophilic cell adhesion. Isoform 1 interacts with LCK; mediates phosphorylation at Tyr-488 and Tyr-515 resulting in PTPN6 association. Isoform 1 interacts with PTPN6; this interaction is phosphorylation-dependent and causes a profound decrease in TCR stimulation-induced CD247 and ZAP70 phosphorylation. Isoform 1 interacts with TCR/CD3 complex through TCR beta chain and CD3E; colocalizes at the cell surface and upon stimulation of the TCR/CD3 complex recruits PTPN6 in the TCR/CD3 complex, resulting in dephosphorylation of CD247 and ZAP70. Isoform 1 interacts (via cytoplasmic domain) with SHC1 (via SH2 domain); SHC1 mediates interaction with INSR or EGFR in a Ser-503 phosphorylation-dependent manner. Isoform 1 interacts with EGFR; the interaction is indirect. Isoform 1 interacts with CSF3R; down-regulates the CSF3R-STAT3 pathway through recruitment of PTPN6 that dephosphorylates CSF3R. Isoform 1 (phosphorylated form) interacts with TLR4 and SYK; recruits PTPN6 that dephosphorylates SYK, reducing the production of reactive oxygen species (ROS) and lysosome disruption, leading to a reduction of the inflammasome activity. Isoform 1 interacts with FLNA; inhibits cell migration and cell scattering by interfering with the interaction of FLNA with RALA. Isoform 1 interacts (via cytoplasmic domain) with PXN; the interaction is phosphotyrosyl-dependent. Isoform 1 interacts with KLRK1; recruits PTPN6 that dephosphorylates VAV1. Isoform 1 interacts with CEACAM8. Isoform 1 interacts with FASN; this interaction is insulin and phosphorylation-dependent; reduces fatty-acid synthase activity. Interacts (via Ig-like V-type) with HAVCR2 (via Ig-like V-type); facilitates the maturation and cell surface expression of HAVCR2 thereby regulating T-cell tolerance induction. Isoform 2 interacts (via the cytoplasmic domain) with ANXA2; this interaction is regulated by phosphorylation and appears in the AIIt complex. Interacts (via Lewis X moieties) with CD209 (via C-type lectin domain); this interaction is regulated by the glycosylation pattern of CEACAM1 on cell types and regulates contact between dendritic cells and neutrophils. Post-translationally, phosphorylated on serine and tyrosine. Isoform 1 is phosphorylated on tyrosine by Src family kinases like SRC and LCK and by receptor like CSF3R, EGFR and INSR upon stimulation. Phosphorylated at Ser-503; mediates activity. Phosphorylated at Tyr-488; regulates activity. Phosphorylated at Tyr-488 by EGFR and INSR upon stimulation; this phosphorylation is Ser-503-phosphorylation-dependent; mediates cellular internalization; increases interaction with FASN. Phosphorylated at Tyr-488 and Tyr-515 by LCK; mediates PTPN6 association and is regulated by homophilic ligation of CEACAM1 in the absence of T-cell activation. Phosphorylated at Tyr-515; mediates interaction with PTPN11. Phosphorylated on serine and threonine. In terms of tissue distribution, expressed in granulocytes, lymphocytes, granulocytes, B cells, and T-cells. Expressed in bone. Highly expressed in liver and femur. Highly expressed in neutrophils, and to a lesser extent inmonocytes, and macrophages. Slightly higher expressed in peripheral blood neutrophils (PBNs). Intestinal T-cells predominantly express isoform 2 while extraintestinal T-cells mainly express isoform 1. Expressed in small intestine and colon.

The protein localises to the cell membrane. It is found in the lateral cell membrane. Its subcellular location is the apical cell membrane. It localises to the basal cell membrane. The protein resides in the cell junction. The protein localises to the adherens junction. It is found in the cytoplasmic vesicle. Its subcellular location is the secretory vesicle. It localises to the cell projection. The protein resides in the microvillus membrane. Cell adhesion protein that mediates homophilic cell adhesion in a calcium-independent manner. Plays a role as coinhibitory receptor in immune response, insulin action and also functions as an activator during angiogenesis. Its coinhibitory receptor function is phosphorylation- and PTPN6 -dependent, which in turn, suppress signal transduction of associated receptors by dephosphorylation of their downstream effectors. Plays a role in immune response, of T-cells, natural killer (NK) and neutrophils. Upon TCR/CD3 complex stimulation, inhibits TCR-mediated cytotoxicity by blocking granule exocytosis by mediating homophilic binding to adjacent cells, allowing interaction with and phosphorylation by LCK and interaction with the TCR/CD3 complex which recruits PTPN6 resulting in dephosphorylation of CD247 and ZAP70. Also inhibits T-cell proliferation and cytokine production through inhibition of JNK cascade and plays a crucial role in regulating autoimmunity and anti-tumor immunity by inhibiting T-cell through its interaction with HAVCR2. Upon natural killer (NK) cells activation, inhibit KLRK1-mediated cytolysis of CEACAM1-bearing tumor cells by trans-homophilic interactions with CEACAM1 on the target cell and lead to cis-interaction between CEACAM1 and KLRK1, allowing PTPN6 recruitment and then VAV1 dephosphorylation. Upon neutrophils activation negatively regulates IL1B production by recruiting PTPN6 to a SYK-TLR4-CEACAM1 complex, that dephosphorylates SYK, reducing the production of reactive oxygen species (ROS) and lysosome disruption, which in turn, reduces the activity of the inflammasome. Down-regulates neutrophil production by acting as a coinhibitory receptor for CSF3R by downregulating the CSF3R-STAT3 pathway through recruitment of PTPN6 that dephosphorylates CSF3R. Also regulates insulin action by promoting INS clearance and regulating lipogenesis in liver through regulating insulin signaling. Upon INS stimulation, undergoes phosphorylation by INSR leading to INS clearance by increasing receptor-mediated insulin endocytosis. This inernalization promotes interaction with FASN leading to receptor-mediated insulin degradation and to reduction of FASN activity leading to negative regulation of fatty acid synthesis. INSR-mediated phosphorylation also provokes a down-regulation of cell proliferation through SHC1 interaction resulting in decrease coupling of SHC1 to the MAPK3/ERK1-MAPK1/ERK2 and phosphatidylinositol 3-kinase pathways. Functions as activator in angiogenesis by promoting blood vessel remodeling through endothelial cell differentiation and migration and in arteriogenesis by increasing the number of collateral arteries and collateral vessel calibers after ischemia. Also regulates vascular permeability through the VEGFR2 signaling pathway resulting in control of nitric oxide production. Down-regulates cell growth in response to EGF through its interaction with SHC1 that mediates interaction with EGFR resulting in decrease coupling of SHC1 to the MAPK3/ERK1-MAPK1/ERK2 pathway. Negatively regulates platelet aggregation by decreasing platelet adhesion on type I collagen through the GPVI-FcRgamma complex. Inhibits cell migration and cell scattering through interaction with FLNA; interferes with the interaction of FLNA with RALA. Mediates bile acid transport activity in a phosphorylation dependent manner. Negatively regulates osteoclastogenesis. Its function is as follows. Cell adhesion protein that mediates homophilic cell adhesion in a calcium-independent manner. Promotes populations of T-cells regulating IgA production and secretion associated with control of the commensal microbiota and resistance to enteropathogens. Functionally, (Microbial infection) In case of murine coronavirus (MHV) infection, serves as receptor for MHV S1 spike glycoprotein. The chain is Cell adhesion molecule CEACAM1 from Mus musculus (Mouse).